A 435-amino-acid polypeptide reads, in one-letter code: Beta-arrestin arr-1 (435 aa).

Residues 358–382 (LTHSKPPESPERTDRGLPSIEATNG) are disordered. The segment covering 362–372 (KPPESPERTDR) has biased composition (basic and acidic residues). Positions 390–394 (LIQLH) match the Clathrin box motif. The short motif at 404-414 (DLIFEDFARMR) is the [DE]-X(1,2)-F-X-X-[FL]-X-X-X-R motif element. The segment at 416–435 (HGNDSEDQPSPSANLPPSLL) is disordered. A compositionally biased stretch (low complexity) spans 424 to 435 (PSPSANLPPSLL).

This sequence belongs to the arrestin family. In terms of assembly, component of a complex composed of arr-1, daf-18 and mpz-1. Within the complex, interacts (via C-terminus) with mpz-1 (via PDZ domain) and phosphatase daf-18. May interact (via C-terminus) with clathrin chc-1 and beta-2 adaptin (AP2) apb-1. Expressed in head neurons, nerve ring and ventral nerve cord (at protein level). Expressed in the nervous system including the nerve ring and the ventral and dorsal nerve cords. Highly expressed in amphid chemosensory neurons AWA, AWB, AWC, ADL and ASH, and in hermaphrodite specific neuron HSN. Also expressed in the intestine.

It localises to the perikaryon. The protein localises to the cell projection. It is found in the dendrite. Adapter protein required for olfactory adaptation and recovery to volatile odorants, probably by desensitization of G-protein coupled receptors (GPCR). May play a role in clathrin-mediated GPCR endocytosis. Acts as a positive regulator of insulin-like daf-2 signaling pathway probably by forming a complex with mpz-1 and phosphatase daf-18 likely resulting in daf-18 inhibition. Involved in egg-laying. The chain is Beta-arrestin arr-1 from Caenorhabditis elegans.